The primary structure comprises 100 residues: Small ribosomal subunit protein uS14c (100 aa).

This sequence belongs to the universal ribosomal protein uS14 family. In terms of assembly, part of the 30S ribosomal subunit.

It is found in the plastid. The protein resides in the chloroplast. Its function is as follows. Binds 16S rRNA, required for the assembly of 30S particles. This is Small ribosomal subunit protein uS14c from Psilotum nudum (Whisk fern).